A 264-amino-acid chain; its full sequence is Outer kinetochore KNL1 complex subunit sos7 (264 aa).

Residues 90–236 (EAEDNEKLET…SNQIKAAIHT (147 aa)) are a coiled coil.

It belongs to the KRE28 family. As to quaternary structure, component of the KNL1/SPC105 complex composed of at least spc7 and sos7. Part of the outer kinetochore KMN network that includes the KNL1, MIS12 and NDC80 complexes. Interacts (via C-terminus) with spc7 (via C-terminus); the interaction is direct.

The protein resides in the nucleus. Its subcellular location is the chromosome. The protein localises to the centromere. It is found in the kinetochore. Functionally, acts as a component of the outer kinetochore KNL1 complex that facilitates microtubule-kinetochore interactions and the spindle assembly checkpoint. Kinetochores, consisting of a centromere-associated inner segment and a microtubule-contacting outer segment, play a crucial role in chromosome segregation by mediating the physical connection between centromeric DNA and spindle microtubules. The outer kinetochore is made up of the ten-subunit KMN network, comprising the MIS12, NDC80 and KNL1 complexes, and auxiliary microtubule-associated components; together they connect the outer kinetochore with the inner kinetochore, bind microtubules, and mediate interactions with mitotic checkpoint proteins that delay anaphase until chromosomes are bioriented on the spindle. This is Outer kinetochore KNL1 complex subunit sos7 (sos7) from Schizosaccharomyces pombe (strain 972 / ATCC 24843) (Fission yeast).